The chain runs to 507 residues: Transcription factor SOX-9 (507 aa).

Disordered regions lie at residues 1 to 67 (MNLL…SEED) and 160 to 250 (RLRV…AGKV). The span at 30–41 (SAGSPCPSGSGS) shows a compositional bias: low complexity. Residues 42–52 (DTENTRPQENT) are compositionally biased toward polar residues. Basic and acidic residues-rich tracts occupy residues 56 to 67 (GEPDLKKESEED) and 160 to 174 (RLRV…DYKY). Residues 63–103 (ESEEDKFPVCIREAVSQVLKGYDWTLVPMPVRVNGSSKNKP) are dimerization (DIM). A PQA region spans residues 63-103 (ESEEDKFPVCIREAVSQVLKGYDWTLVPMPVRVNGSSKNKP). Residue serine 64 is modified to Phosphoserine. The segment at residues 105–173 (VKRPMNAFMV…QHKKDHPDYK (69 aa)) is a DNA-binding region (HMG box). Serine 211 is modified (phosphoserine). The segment at 224–307 (PGEHSGQSQG…LPPNGHPGVP (84 aa)) is transactivation domain (TAM). Short sequence motifs (9aaTAD) lie at residues 275–284 (IGELSSDVIS) and 290–298 (DVNEFDQYL). The segment at 335-429 (WMSKQQAPPP…PFNLPHYNPS (95 aa)) is disordered. Over residues 341–369 (APPPPPQQPPQAPQAPQAPPQQQAPPQPQ) the composition is skewed to pro residues. Polar residues predominate over residues 378–420 (HTLTTLSSEPGQSQRTHIKTEQLSPSHYSEQQQHSPQQISYSP). The tract at residues 392-507 (RTHIKTEQLS…QPVYTQLTRP (116 aa)) is transactivation domain (TAC). A Glycyl lysine isopeptide (Lys-Gly) (interchain with G-Cter in ubiquitin) cross-link involves residue lysine 396. The short motif at 458 to 466 (SGLYSTFTY) is the 9aaTAD 3 element. Residues 477–507 (PIADTSGVPSIPQTHSPQHWEQPVYTQLTRP) form a disordered region. Residues 483–507 (GVPSIPQTHSPQHWEQPVYTQLTRP) are compositionally biased toward polar residues.

As to quaternary structure, homodimer; homodimerization is required for activity. Interacts (via C-terminus) with ZNF219; forming a complex that binds to the COL2A1 promoter and activates COL2A1 expression. Interacts with DDRGK1. Interacts with EP300/p300. Interacts with beta-catenin (CTNNB1); inhibiting CTNNB1 activity by competing with the binding sites of TCF/LEF within CTNNB1. In terms of processing, acetylated; acetylation impairs nuclear localization and ability to transactivate expression of target genes. Deacetylated by SIRT1. Post-translationally, phosphorylation at Ser-64 and Ser-211 by PKA increases transcriptional activity and may help delay chondrocyte maturation downstream of PTHLH/PTHrP signaling. Phosphorylation at either Ser-64 or Ser-211 is required for sumoylation, but phosphorylation is not dependent on sumoylation. Phosphorylated on tyrosine residues; tyrosine dephosphorylation by PTPN11/SHP2 blocks SOX9 phosphorylation by PKA and subsequent SUMOylation. Sumoylated; phosphorylation at either Ser-64 or Ser-211 is required for sumoylation. Sumoylation is induced by BMP signaling pathway. In terms of processing, ubiquitinated; ubiquitination leads to proteasomal degradation and is negatively regulated by DDRGK1.

It is found in the nucleus. Transcription factor that plays a key role in chondrocytes differentiation and skeletal development. Specifically binds the 5'-ACAAAG-3' DNA motif present in enhancers and super-enhancers and promotes expression of genes important for chondrogenesis, including cartilage matrix protein-coding genes COL2A1, COL4A2, COL9A1, COL11A2 and ACAN, SOX5 and SOX6. Also binds to some promoter regions. Plays a central role in successive steps of chondrocyte differentiation. Absolutely required for precartilaginous condensation, the first step in chondrogenesis during which skeletal progenitors differentiate into prechondrocytes. Together with SOX5 and SOX6, required for overt chondrogenesis when condensed prechondrocytes differentiate into early stage chondrocytes, the second step in chondrogenesis. Later, required to direct hypertrophic maturation and block osteoblast differentiation of growth plate chondrocytes: maintains chondrocyte columnar proliferation, delays prehypertrophy and then prevents osteoblastic differentiation of chondrocytes by lowering beta-catenin (CTNNB1) signaling and RUNX2 expression. Also required for chondrocyte hypertrophy, both indirectly, by keeping the lineage fate of chondrocytes, and directly, by remaining present in upper hypertrophic cells and transactivating COL10A1 along with MEF2C. Low lipid levels are the main nutritional determinant for chondrogenic commitment of skeletal progenitor cells: when lipids levels are low, FOXO (FOXO1 and FOXO3) transcription factors promote expression of SOX9, which induces chondrogenic commitment and suppresses fatty acid oxidation. Mechanistically, helps, but is not required, to remove epigenetic signatures of transcriptional repression and deposit active promoter and enhancer marks at chondrocyte-specific genes. Acts in cooperation with the Hedgehog pathway-dependent GLI (GLI1 and GLI3) transcription factors. In addition to cartilage development, also acts as a regulator of proliferation and differentiation in epithelial stem/progenitor cells: involved in the lung epithelium during branching morphogenesis, by balancing proliferation and differentiation and regulating the extracellular matrix. Controls epithelial branching during kidney development. This chain is Transcription factor SOX-9, found in Rattus norvegicus (Rat).